Reading from the N-terminus, the 110-residue chain is UPF0122 protein YlxM (110 aa).

Belongs to the UPF0122 family.

Its function is as follows. Might take part in the signal recognition particle (SRP) pathway. This is inferred from the conservation of its genetic proximity to ftsY/ffh. May be a regulatory protein. This is UPF0122 protein YlxM (ylxM) from Bacillus subtilis (strain 168).